The primary structure comprises 162 residues: Caveolin-2 (162 aa).

The Cytoplasmic portion of the chain corresponds to 1-86 (MGLETEKADV…FEISKYVMYK (86 aa)). Tyr-19 is subject to Phosphotyrosine. Phosphoserine occurs at positions 20 and 36. Residues 87–107 (FLTVFLAIPLAFVAGILFATL) constitute an intramembrane region (helical). At 108–162 (SCLHIWIIMPFVKTCLMVLPSVQTIWKSVTDVIIAPLCTSVGRSFSSISLQLSHD) the chain is on the cytoplasmic side.

The protein belongs to the caveolin family. As to quaternary structure, homodimer. Caveolin-1 and -2 colocalize and form a stable hetero-oligomeric complex.

Its subcellular location is the golgi apparatus membrane. It localises to the cell membrane. It is found in the membrane. The protein localises to the caveola. Its function is as follows. May act as a scaffolding protein within caveolar membranes. Interacts directly with G-protein alpha subunits and can functionally regulate their activity. Caveolin-2 may function as an accessory protein in conjunction with caveolin-1. The chain is Caveolin-2 (CAV2) from Microcebus murinus (Gray mouse lemur).